The primary structure comprises 54 residues: MGKYKPPAERRFGKGVQLCKRCGSRDSVIQKYGLYLCRQCFREVAYPMGFRKTR.

Residues Cys19, Cys22, Cys37, and Cys40 each contribute to the Zn(2+) site.

Belongs to the universal ribosomal protein uS14 family. Zinc-binding uS14 subfamily. In terms of assembly, part of the 30S ribosomal subunit. The cofactor is Zn(2+).

In terms of biological role, binds 16S rRNA, required for the assembly of 30S particles. This is Small ribosomal subunit protein uS14 from Sulfolobus acidocaldarius (strain ATCC 33909 / DSM 639 / JCM 8929 / NBRC 15157 / NCIMB 11770).